A 364-amino-acid polypeptide reads, in one-letter code: Protein MGF 360-1L (364 aa).

Belongs to the asfivirus MGF 360 family.

In terms of biological role, plays a role in virus cell tropism, and may be required for efficient virus replication in macrophages. This Ornithodoros (relapsing fever ticks) protein is Protein MGF 360-1L.